We begin with the raw amino-acid sequence, 142 residues long: Large ribosomal subunit protein uL13 (142 aa).

The protein belongs to the universal ribosomal protein uL13 family. In terms of assembly, part of the 50S ribosomal subunit.

Its function is as follows. This protein is one of the early assembly proteins of the 50S ribosomal subunit, although it is not seen to bind rRNA by itself. It is important during the early stages of 50S assembly. The sequence is that of Large ribosomal subunit protein uL13 from Stutzerimonas stutzeri (strain A1501) (Pseudomonas stutzeri).